The sequence spans 395 residues: Choline/ethanolamine kinase (395 aa).

N-acetylalanine is present on alanine 2. Residues serine 75–leucine 81, arginine 104, glutamine 146–proline 152, glutamine 244, and aspartate 264 contribute to the ATP site. Phosphocholine is bound at residue glycine 77–serine 79.

The protein belongs to the choline/ethanolamine kinase family. As to quaternary structure, homodimer, and heterodimer with CHKA.

It carries out the reaction choline + ATP = phosphocholine + ADP + H(+). The catalysed reaction is ethanolamine + ATP = phosphoethanolamine + ADP + H(+). The protein operates within phospholipid metabolism; phosphatidylethanolamine biosynthesis; phosphatidylethanolamine from ethanolamine: step 1/3. In terms of biological role, has a key role in phospholipid metabolism, and catalyzes the first step of phosphatidylethanolamine and phosphatidylcholine biosynthesis. This chain is Choline/ethanolamine kinase (CHKB), found in Homo sapiens (Human).